Reading from the N-terminus, the 1016-residue chain is Rho family-interacting cell polarization regulator 2 (1016 aa).

A phosphoserine mark is found at S21 and S37. The interval 44-73 (AVKKPQAKLKKMHNLGHKNSSPPKEPQPKR) is disordered. The span at 48-59 (PQAKLKKMHNLG) shows a compositional bias: basic residues. The involved in cell filopodia formation stretch occupies residues 55 to 113 (MHNLGHKNSSPPKEPQPKRVEEVYRALKNGLDEYLEVHQTELDKLTTQLKDMRRNSRLG). Residues 85-112 (LDEYLEVHQTELDKLTTQLKDMRRNSRL) adopt a coiled-coil conformation. Residue S341 is modified to Phosphoserine. Positions 414–428 (TSTELPPGSQSSQNE) are enriched in polar residues. Residues 414–469 (TSTELPPGSQSSQNEGLKDSSSASCSSSSREGSEPRPHPEGETQGLGKPEGCPVAT) form a disordered region. Positions 433–442 (SSSASCSSSS) are enriched in low complexity. A compositionally biased stretch (basic and acidic residues) spans 444–454 (EGSEPRPHPEG). A phosphoserine mark is found at S520 and S532. Positions 636–656 (DSVFSDTETEKNSYRSVHPEA) are disordered. Basic and acidic residues predominate over residues 643-656 (ETEKNSYRSVHPEA).

This sequence belongs to the RIPOR family. Homooligomer; homooligomerization is regulated by RHOC and leads to the formation of concatemers through the association of N- and C-termini. Interacts (phosphorylated form) with 14-3-3 proteins; these interactions occur during myogenic cell differentiation and also induces T cell proliferation arrest. Interacts (phosphorylated form) with HDAC6; this interaction occurs during early myogenic differentiation, prevents HDAC6 to deacetylate tubulin and also induces T cell proliferation arrest. Interacts with DYSF; this interaction occurs during early myogenic differentiation. Interacts with MYOF. Interacts (via active GTP- or inactive GDP-bound forms) with RHOA; this interaction is direct, blocks the loading of GTP to RHOA and decreases upon chemokine CCL19 stimulation in primary T lymphocytes. Interacts with RHOC. Interacts (via phosphorylated form) with YWHAB; this interaction occurs in a chemokine-dependent manner and does not compete for binding of RIPOR2 with RHOA nor blocks inhibition of RIPOR2-mediated RHOA activity. Interacts with YWHAE. Interacts with YWHAQ. In terms of processing, phosphorylated. Chemokine-induced phosphorylation in neutrophils occurs in a PKC- and AKT-dependent manner, resulting in RIPOR2 interaction with YWHAB and stabilization. Phosphorylated by PKCA, AKT1 and MAPKAPK1A; in vitro.

It localises to the cytoplasm. It is found in the cytoskeleton. The protein localises to the cell projection. The protein resides in the filopodium. Its subcellular location is the apical cell membrane. It localises to the stereocilium. It is found in the stereocilium membrane. Functionally, acts as an inhibitor of the small GTPase RHOA and plays several roles in the regulation of myoblast and hair cell differentiation, lymphocyte T proliferation and neutrophil polarization. Plays a role in fetal mononuclear myoblast differentiation by promoting filopodia and myotube formation. Maintains naive T lymphocytes in a quiescent state and prevents chemokine-induced T lymphocyte responses, such as cell adhesion, polarization and migration. Involved also in the regulation of neutrophil polarization, chemotaxis and adhesion. Required for normal development of inner and outer hair cell stereocilia within the cochlea of the inner ear. Plays a role for maintaining the structural organization of the basal domain of stereocilia. Involved in mechanosensory hair cell function. Required for normal hearing. The polypeptide is Rho family-interacting cell polarization regulator 2 (Bos taurus (Bovine)).